The primary structure comprises 437 residues: Trigger factor (437 aa).

In terms of domain architecture, PPIase FKBP-type spans 161–246 (DDQVNIDFVG…VNSVSAPQLP (86 aa)).

Belongs to the FKBP-type PPIase family. Tig subfamily.

It is found in the cytoplasm. The catalysed reaction is [protein]-peptidylproline (omega=180) = [protein]-peptidylproline (omega=0). Involved in protein export. Acts as a chaperone by maintaining the newly synthesized protein in an open conformation. Functions as a peptidyl-prolyl cis-trans isomerase. In Pseudomonas putida (strain W619), this protein is Trigger factor.